The sequence spans 193 residues: Rho-related protein racB (193 aa).

GTP-binding residues include Ala-13, Gly-15, Lys-16, Thr-17, Cys-18, Tyr-32, Thr-35, Gly-60, Lys-116, Asp-118, and Ala-159. Thr-17 lines the Mg(2+) pocket. Short sequence motifs (switch) lie at residues 26-37 and 57-75; these read NAFPTEYVPTVF and DTAGQEDYDRIRPLSYPQT. Residue Thr-35 coordinates Mg(2+). Cysteine methyl ester is present on Cys-190. Cys-190 is lipidated: S-geranylgeranyl cysteine. The propeptide at 191–193 is removed in mature form; sequence LIF.

The protein belongs to the small GTPase superfamily. Rho family. Mg(2+) serves as cofactor.

Its subcellular location is the cell membrane. It is found in the cytoplasm. It localises to the cytoskeleton. The catalysed reaction is GTP + H2O = GDP + phosphate + H(+). Regulated by guanine nucleotide exchange factors (GEFs) which promote the exchange of bound GDP for free GTP, GTPase activating proteins (GAPs) which increase the GTP hydrolysis activity, and GDP dissociation inhibitors which inhibit the dissociation of the nucleotide from the GTPase. Small GTPase which cycles between active GTP-bound and inactive GDP-bound states. The sequence is that of Rho-related protein racB from Entamoeba histolytica (strain ATCC 30459 / HM-1:IMSS / ABRM).